The chain runs to 282 residues: Kanosamine-6-phosphate phosphatase (282 aa).

The active-site Nucleophile is D25. Positions 25 and 27 each coordinate Mg(2+). K209 is a phosphate binding site. Residues D232 and S233 each contribute to the Mg(2+) site. N235 provides a ligand contact to phosphate.

This sequence belongs to the HAD-like hydrolase superfamily. Cof family. Homotetramer. It depends on Mg(2+) as a cofactor.

It catalyses the reaction D-kanosamine 6-phosphate + H2O = kanosamine + phosphate. It participates in antibiotic biosynthesis; kanosamine biosynthesis. Its function is as follows. Involved in the biosynthesis of kanosamine (3-amino-3-deoxy-D-glucose), which is known to have antibiotic and antifungal properties, and to be a precursor of the antibiotic neotrehalosadiamine (3,3'-diamino-3,3'-dideoxy-alpha,beta-trehalose (NTD)). Catalyzes the dephosphorylation of kanosamine 6-phosphate to yield kanosamine. There is a trace amount of activity using glucosamine-6-phosphate. This is Kanosamine-6-phosphate phosphatase (ntdB) from Bacillus subtilis (strain 168).